The following is a 401-amino-acid chain: Zinc finger CCHC domain-containing protein 12 (401 aa).

2 disordered regions span residues Met-1 to Pro-20 and Asp-270 to Pro-292. Acidic residues predominate over residues Asp-270–Asp-282. The CCHC-type zinc finger occupies Val-345 to Asn-362.

Belongs to the ZCCHC12 family. In terms of assembly, interacts with SMAD1 and CREB-binding protein (CBP). Forms a protein-DNA complex through its association with SMAD1.

Functionally, transcriptional coactivator in the bone morphogenetic protein (BMP)-signaling pathway. It positively modulates BMP signaling by interacting with SMAD1 and associating with CBP in the transcription complex. It contributes to the BMP-induced enhancement of cholinergic-neuron-specific gene expression. This is Zinc finger CCHC domain-containing protein 12 (Zcchc12) from Rattus norvegicus (Rat).